A 95-amino-acid polypeptide reads, in one-letter code: Aspartyl/glutamyl-tRNA(Asn/Gln) amidotransferase subunit C (95 aa).

This sequence belongs to the GatC family. Heterotrimer of A, B and C subunits.

The enzyme catalyses L-glutamyl-tRNA(Gln) + L-glutamine + ATP + H2O = L-glutaminyl-tRNA(Gln) + L-glutamate + ADP + phosphate + H(+). It catalyses the reaction L-aspartyl-tRNA(Asn) + L-glutamine + ATP + H2O = L-asparaginyl-tRNA(Asn) + L-glutamate + ADP + phosphate + 2 H(+). Allows the formation of correctly charged Asn-tRNA(Asn) or Gln-tRNA(Gln) through the transamidation of misacylated Asp-tRNA(Asn) or Glu-tRNA(Gln) in organisms which lack either or both of asparaginyl-tRNA or glutaminyl-tRNA synthetases. The reaction takes place in the presence of glutamine and ATP through an activated phospho-Asp-tRNA(Asn) or phospho-Glu-tRNA(Gln). This is Aspartyl/glutamyl-tRNA(Asn/Gln) amidotransferase subunit C from Rhodopseudomonas palustris (strain BisB18).